Consider the following 393-residue polypeptide: Major outer membrane porin, serovar L1 (393 aa).

Positions 1 to 22 (MKKLLKSVLVFAALSSASSLQA) are cleaved as a signal peptide.

The protein belongs to the chlamydial porin (CP) (TC 1.B.2) family. Part of a disulfide cross-linked outer membrane complex (COMC) composed of the major outer membrane porin (MOMP), the small cysteine-rich protein (OmcA) and the large cysteine-rich periplasmic protein (OmcB).

Its subcellular location is the cell outer membrane. Functionally, in elementary bodies (EBs, the infectious stage, which is able to survive outside the host cell) provides the structural integrity of the outer envelope through disulfide cross-links with the small cysteine-rich protein and the large cysteine-rich periplasmic protein. It has been described in publications as the Sarkosyl-insoluble COMC (Chlamydia outer membrane complex), and serves as the functional equivalent of peptidoglycan. Permits diffusion of specific solutes through the outer membrane. The polypeptide is Major outer membrane porin, serovar L1 (ompA) (Chlamydia trachomatis).